Reading from the N-terminus, the 636-residue chain is Chaperone protein HtpG (636 aa).

The a; substrate-binding stretch occupies residues 1–342; it reads MSGETLEFQA…AHDLSLNISR (342 aa). The b stretch occupies residues 343-558; it reads ELLQQDRQIQ…AHDVTPTLEK (216 aa). Residues 559-636 form a c region; sequence MYRAMGHEVP…ILAERLARTL (78 aa).

This sequence belongs to the heat shock protein 90 family. As to quaternary structure, homodimer.

Its subcellular location is the cytoplasm. Molecular chaperone. Has ATPase activity. This chain is Chaperone protein HtpG, found in Salinispora arenicola (strain CNS-205).